We begin with the raw amino-acid sequence, 415 residues long: MSHKSAEMYELKKKVEELKSYRGRATELVSLYIPAGYDINKVMQQLREEYGTAQNIKSKSTRKNVLGALERAMQHLKLYKQTPENGLALFVGNVSEQEGVSDIKLWAIVPPEPLNVRLYRCDQTFVTEPLEEMLRVKDAYGLITVEKNEATIGLLRGKRIEVIDELTSNVPGKTRAGGQSARRYERIREQETHEFMKRIGEHANKAFLPLLEKGELRGIIIGGPGPTKEEFVEGDYLHHELRKKVIGVVDISYHGEYGLRELVEKASDILKDHEAVKERQLIQEFFKHLVKDTGMITYGEKEVRKALELGAVDKLLISEGYDKVRVRAKCNNCGWEELKTMSEGEFHVYKKQLTHCPKCGSQNITFEKWDVAEELIKMAEESGADVEIISLDTEEGQQFYKAFGGLGAILRYKIQ.

This sequence belongs to the eukaryotic release factor 1 family. In terms of assembly, heterodimer of two subunits, one of which binds GTP.

It is found in the cytoplasm. In terms of biological role, directs the termination of nascent peptide synthesis (translation) in response to the termination codons UAA, UAG and UGA. The polypeptide is Peptide chain release factor subunit 1 (Thermococcus kodakarensis (strain ATCC BAA-918 / JCM 12380 / KOD1) (Pyrococcus kodakaraensis (strain KOD1))).